Reading from the N-terminus, the 132-residue chain is MTRREIREHLFRMLFRKEFHEPTELEEQVLFYFDSLESITPEQQEYLNVRFDKINEKLGEIDTILANASSGWKLNRMGKVDLNIMRLATFEIRFDDEVPVKVAINEAIELAKKYGGDSSASFVNGILAKVID.

Belongs to the NusB family.

In terms of biological role, involved in transcription antitermination. Required for transcription of ribosomal RNA (rRNA) genes. Binds specifically to the boxA antiterminator sequence of the ribosomal RNA (rrn) operons. This is Transcription antitermination protein NusB from Lachnoclostridium phytofermentans (strain ATCC 700394 / DSM 18823 / ISDg) (Clostridium phytofermentans).